A 353-amino-acid chain; its full sequence is MTAILERRESTSLWGRFCNWITSTENRLYIGWFGVLMIPTLLTATSVFIIAFIAAPPVDIDGIREPVSGSLLYGNNIISGAIIPTSAAIGLHFYPIWEAASVDEWLYNGGPYELIVLHFLLGVACYMGREWELSFRLGMRPWIAVAYSAPVAAATAVFLIYPIGQGSFSDGMPLGISGTFNFMIVFQAEHNILMHPFHMLGVAGVFGGSLFSAMHGSLVTSSLIRETTENESANEGYKFGQEEETYNIVAAHGYFGRLIFQYASFNNSRSLHFFLAAWPVVGIWFTALGISTMAFNLNGFNFNQSVVDSQGRVINTWADIINRANLGMEVMHERNAHNFPLDLAAVEVPAING.

T2 bears the N-acetylthreonine mark. T2 carries the post-translational modification Phosphothreonine. The next 3 membrane-spanning stretches (helical) occupy residues 29–46 (YIGWFGVLMIPTLLTATS), 118–133 (HFLLGVACYMGREWEL), and 142–156 (WIAVAYSAPVAAATA). Residue H118 coordinates chlorophyll a. Y126 lines the pheophytin a pocket. Residues D170 and E189 each contribute to the [CaMn4O5] cluster site. The helical transmembrane segment at 197-218 (FHMLGVAGVFGGSLFSAMHGSL) threads the bilayer. Chlorophyll a is bound at residue H198. A quinone-binding positions include H215 and 264–265 (SF). Fe cation is bound at residue H215. H272 contacts Fe cation. Residues 274–288 (FLAAWPVVGIWFTAL) form a helical membrane-spanning segment. [CaMn4O5] cluster-binding residues include H332, E333, D342, and A344. The propeptide occupies 345-353 (AVEVPAING).

The protein belongs to the reaction center PufL/M/PsbA/D family. PSII is composed of 1 copy each of membrane proteins PsbA, PsbB, PsbC, PsbD, PsbE, PsbF, PsbH, PsbI, PsbJ, PsbK, PsbL, PsbM, PsbT, PsbX, PsbY, PsbZ, Psb30/Ycf12, at least 3 peripheral proteins of the oxygen-evolving complex and a large number of cofactors. It forms dimeric complexes. The cofactor is The D1/D2 heterodimer binds P680, chlorophylls that are the primary electron donor of PSII, and subsequent electron acceptors. It shares a non-heme iron and each subunit binds pheophytin, quinone, additional chlorophylls, carotenoids and lipids. D1 provides most of the ligands for the Mn4-Ca-O5 cluster of the oxygen-evolving complex (OEC). There is also a Cl(-1) ion associated with D1 and D2, which is required for oxygen evolution. The PSII complex binds additional chlorophylls, carotenoids and specific lipids.. In terms of processing, tyr-161 forms a radical intermediate that is referred to as redox-active TyrZ, YZ or Y-Z. C-terminally processed by CTPA; processing is essential to allow assembly of the oxygen-evolving complex and thus photosynthetic growth.

It is found in the plastid. The protein resides in the chloroplast thylakoid membrane. The enzyme catalyses 2 a plastoquinone + 4 hnu + 2 H2O = 2 a plastoquinol + O2. Photosystem II (PSII) is a light-driven water:plastoquinone oxidoreductase that uses light energy to abstract electrons from H(2)O, generating O(2) and a proton gradient subsequently used for ATP formation. It consists of a core antenna complex that captures photons, and an electron transfer chain that converts photonic excitation into a charge separation. The D1/D2 (PsbA/PsbD) reaction center heterodimer binds P680, the primary electron donor of PSII as well as several subsequent electron acceptors. The sequence is that of Photosystem II protein D1 from Hordeum vulgare (Barley).